The following is a 115-amino-acid chain: Protein TrbA (115 aa).

A run of 4 helical transmembrane segments spans residues 5 to 25, 39 to 59, 60 to 80, and 91 to 111; these read YLKMFTGVVLLIFVIIAGYFF, LVFLVVNIACLYVLTASLWFL, CGAIMSQGAALVVSIVAAALP, and IFICIMLSSVWSGVMWFFIRG.

The protein localises to the cell membrane. The chain is Protein TrbA (trbA) from Escherichia coli (strain K12).